Consider the following 248-residue polypeptide: Probable transcriptional regulator LumQ (248 aa).

An HTH araC/xylS-type domain is found at 148 to 246 (VLIDNYIEQH…GMSPTRYQFF (99 aa)). DNA-binding regions (H-T-H motif) lie at residues 165–186 (AELS…KSQM) and 213–236 (LSQV…RRLY).

Its function is as follows. Probable transcriptional regulator. Its target gene(s) is not yet known. In Photobacterium leiognathi, this protein is Probable transcriptional regulator LumQ (lumQ).